A 67-amino-acid polypeptide reads, in one-letter code: Surface composition regulator (67 aa).

This sequence belongs to the GlgS family.

In terms of biological role, major determinant of cell surface composition. Negatively regulates motility, adhesion and synthesis of biofilm exopolysaccharides. The protein is Surface composition regulator of Salmonella paratyphi A (strain ATCC 9150 / SARB42).